The chain runs to 185 residues: Endoribonuclease YbeY (185 aa).

Zn(2+) contacts are provided by His-135, His-139, and His-145.

This sequence belongs to the endoribonuclease YbeY family. Zn(2+) is required as a cofactor.

Its subcellular location is the cytoplasm. Functionally, single strand-specific metallo-endoribonuclease involved in late-stage 70S ribosome quality control and in maturation of the 3' terminus of the 16S rRNA. The chain is Endoribonuclease YbeY from Parasynechococcus marenigrum (strain WH8102).